The following is a 190-amino-acid chain: Peptidyl-tRNA hydrolase (190 aa).

Tyr17 lines the tRNA pocket. Catalysis depends on His22, which acts as the Proton acceptor. TRNA-binding residues include Tyr67 and Asn69.

It belongs to the PTH family. As to quaternary structure, monomer.

It is found in the cytoplasm. It catalyses the reaction an N-acyl-L-alpha-aminoacyl-tRNA + H2O = an N-acyl-L-amino acid + a tRNA + H(+). Its function is as follows. Hydrolyzes ribosome-free peptidyl-tRNAs (with 1 or more amino acids incorporated), which drop off the ribosome during protein synthesis, or as a result of ribosome stalling. Catalyzes the release of premature peptidyl moieties from peptidyl-tRNA molecules trapped in stalled 50S ribosomal subunits, and thus maintains levels of free tRNAs and 50S ribosomes. This is Peptidyl-tRNA hydrolase from Moorella thermoacetica (strain ATCC 39073 / JCM 9320).